The primary structure comprises 542 residues: Chaperonin GroEL 2 (542 aa).

ATP is bound by residues 30–33, K51, 87–91, G415, and D496; these read TLGP and DGTTT.

This sequence belongs to the chaperonin (HSP60) family. In terms of assembly, forms a cylinder of 14 subunits composed of two heptameric rings stacked back-to-back. Interacts with the co-chaperonin GroES.

The protein localises to the cytoplasm. The enzyme catalyses ATP + H2O + a folded polypeptide = ADP + phosphate + an unfolded polypeptide.. Its function is as follows. Together with its co-chaperonin GroES, plays an essential role in assisting protein folding. The GroEL-GroES system forms a nano-cage that allows encapsulation of the non-native substrate proteins and provides a physical environment optimized to promote and accelerate protein folding. The sequence is that of Chaperonin GroEL 2 from Mesorhizobium japonicum (strain LMG 29417 / CECT 9101 / MAFF 303099) (Mesorhizobium loti (strain MAFF 303099)).